Consider the following 238-residue polypeptide: Ribonuclease PH (238 aa).

Phosphate contacts are provided by residues arginine 86 and 124 to 126; that span reads GTR.

Belongs to the RNase PH family. As to quaternary structure, homohexameric ring arranged as a trimer of dimers.

It carries out the reaction tRNA(n+1) + phosphate = tRNA(n) + a ribonucleoside 5'-diphosphate. Its function is as follows. Phosphorolytic 3'-5' exoribonuclease that plays an important role in tRNA 3'-end maturation. Removes nucleotide residues following the 3'-CCA terminus of tRNAs; can also add nucleotides to the ends of RNA molecules by using nucleoside diphosphates as substrates, but this may not be physiologically important. Probably plays a role in initiation of 16S rRNA degradation (leading to ribosome degradation) during starvation. The chain is Ribonuclease PH from Yersinia pseudotuberculosis serotype O:1b (strain IP 31758).